The sequence spans 804 residues: Leucine--tRNA ligase (804 aa).

The 'HIGH' region signature appears at P40–H51. The short motif at K576–S580 is the 'KMSKS' region element. K579 is a binding site for ATP.

The protein belongs to the class-I aminoacyl-tRNA synthetase family.

It localises to the cytoplasm. The catalysed reaction is tRNA(Leu) + L-leucine + ATP = L-leucyl-tRNA(Leu) + AMP + diphosphate. This is Leucine--tRNA ligase from Bacillus pumilus (strain SAFR-032).